Reading from the N-terminus, the 250-residue chain is 26 kDa periplasmic immunogenic protein (250 aa).

The first 28 residues, 1-28 (MNTRASNFLAASFSTIMLVGAFSLPAFA), serve as a signal peptide directing secretion.

The protein localises to the periplasm. This Brucella abortus (strain S19) protein is 26 kDa periplasmic immunogenic protein (bp26).